We begin with the raw amino-acid sequence, 270 residues long: Protoheme IX farnesyltransferase (270 aa).

A run of 7 helical transmembrane segments spans residues 13 to 30 (LALLNGIAAVAGHALVPD), 33 to 53 (HATLWVALAGVAILAAGGSAL), 95 to 115 (LLVLAAGGPVPPLLGAVALAW), 129 to 149 (LALAIGAVSGALPPVIGWTLA), 156 to 176 (YRIILLAGIFFLWQVPHFWLF), 207 to 227 (LWLGALAASVLLLPAFGLMAP), and 249 to 269 (EATLFSCLNAFPPLMALALLL).

This sequence belongs to the UbiA prenyltransferase family. Protoheme IX farnesyltransferase subfamily.

Its subcellular location is the cell inner membrane. The catalysed reaction is heme b + (2E,6E)-farnesyl diphosphate + H2O = Fe(II)-heme o + diphosphate. The protein operates within porphyrin-containing compound metabolism; heme O biosynthesis; heme O from protoheme: step 1/1. Converts heme B (protoheme IX) to heme O by substitution of the vinyl group on carbon 2 of heme B porphyrin ring with a hydroxyethyl farnesyl side group. This Geobacter sulfurreducens (strain ATCC 51573 / DSM 12127 / PCA) protein is Protoheme IX farnesyltransferase.